The following is a 25-amino-acid chain: GLVASIGRALGGLLADVVKSKEQPA.

In terms of tissue distribution, expressed by the skin parotoid and/or rostral glands.

It localises to the secreted. In terms of biological role, antibacterial peptide, that adopts an alpha helical conformation which can disrupt bacterial membranes. Each caerin displays a different antimicrobial specificity. The sequence is that of Caerin-2.5 from Ranoidea gilleni (Centralian tree frog).